A 224-amino-acid polypeptide reads, in one-letter code: Phosphoribosylformylglycinamidine synthase subunit PurQ (224 aa).

The 221-residue stretch at 4-224 folds into the Glutamine amidotransferase type-1 domain; it reads RIGVVTFPGT…YSALDAVLTG (221 aa). The Nucleophile role is filled by Cys-87. Residues His-195 and Glu-197 contribute to the active site.

Part of the FGAM synthase complex composed of 1 PurL, 1 PurQ and 2 PurS subunits.

The protein resides in the cytoplasm. The enzyme catalyses N(2)-formyl-N(1)-(5-phospho-beta-D-ribosyl)glycinamide + L-glutamine + ATP + H2O = 2-formamido-N(1)-(5-O-phospho-beta-D-ribosyl)acetamidine + L-glutamate + ADP + phosphate + H(+). The catalysed reaction is L-glutamine + H2O = L-glutamate + NH4(+). Its pathway is purine metabolism; IMP biosynthesis via de novo pathway; 5-amino-1-(5-phospho-D-ribosyl)imidazole from N(2)-formyl-N(1)-(5-phospho-D-ribosyl)glycinamide: step 1/2. Part of the phosphoribosylformylglycinamidine synthase complex involved in the purines biosynthetic pathway. Catalyzes the ATP-dependent conversion of formylglycinamide ribonucleotide (FGAR) and glutamine to yield formylglycinamidine ribonucleotide (FGAM) and glutamate. The FGAM synthase complex is composed of three subunits. PurQ produces an ammonia molecule by converting glutamine to glutamate. PurL transfers the ammonia molecule to FGAR to form FGAM in an ATP-dependent manner. PurS interacts with PurQ and PurL and is thought to assist in the transfer of the ammonia molecule from PurQ to PurL. The chain is Phosphoribosylformylglycinamidine synthase subunit PurQ from Mycobacterium bovis (strain ATCC BAA-935 / AF2122/97).